A 315-amino-acid chain; its full sequence is Small ribosomal subunit biogenesis GTPase RsgA (315 aa).

Residues 79–243 (LSKESHILGA…LIDTPGIKGF (165 aa)) form the CP-type G domain. GTP contacts are provided by residues 128–131 (NKID) and 182–190 (GHSGVGKSS). Zn(2+) is bound by residues cysteine 267, cysteine 272, histidine 274, and cysteine 280.

The protein belongs to the TRAFAC class YlqF/YawG GTPase family. RsgA subfamily. As to quaternary structure, monomer. Associates with 30S ribosomal subunit, binds 16S rRNA. It depends on Zn(2+) as a cofactor.

Its subcellular location is the cytoplasm. In terms of biological role, one of several proteins that assist in the late maturation steps of the functional core of the 30S ribosomal subunit. Helps release RbfA from mature subunits. May play a role in the assembly of ribosomal proteins into the subunit. Circularly permuted GTPase that catalyzes slow GTP hydrolysis, GTPase activity is stimulated by the 30S ribosomal subunit. In Porphyromonas gingivalis (strain ATCC BAA-308 / W83), this protein is Small ribosomal subunit biogenesis GTPase RsgA.